Here is a 102-residue protein sequence, read N- to C-terminus: Late embryogenesis abundant protein D-19 (102 aa).

The disordered stretch occupies residues 1–102 (MASEQYQAMR…IDESKFRTKN (102 aa)). Residues 48–58 (EGRHKGGETRK) show a composition bias toward basic and acidic residues.

It belongs to the small hydrophilic plant seed protein family.

Its function is as follows. LEA proteins are late embryonic proteins abundant in higher plant seed embryos. There are two subsets of LEA proteins (5a and 5b), the first ones are expressed when the cotyledon weight reach 80 mg and the second set are expressed above 100 mg. The function of those proteins is not known. In Gossypium hirsutum (Upland cotton), this protein is Late embryogenesis abundant protein D-19.